A 138-amino-acid chain; its full sequence is Ribosome maturation factor RimP (138 aa).

The protein belongs to the RimP family.

It is found in the cytoplasm. Its function is as follows. Required for maturation of 30S ribosomal subunits. This is Ribosome maturation factor RimP from Campylobacter concisus (strain 13826).